The chain runs to 1963 residues: Myosin-4 (1963 aa).

In terms of domain architecture, Myosin N-terminal SH3-like spans D28–P77. Positions E81–D787 constitute a Myosin motor domain. K125 carries the post-translational modification N6,N6,N6-trimethyllysine. G174–T181 serves as a coordination point for ATP. Actin-binding regions lie at residues L662–E684 and R766–A780. An alpha-helical tailpiece (S2) region spans residues M848–E1161. Residues M848 to F1963 are a coiled coil. Composition is skewed to basic and acidic residues over residues L970–Q988 and N1133–S1146. 2 disordered regions span residues L970–E990 and S1125–S1146. The segment at Q1162 to N1173 is hinge. The light meromyosin (LMM) stretch occupies residues Q1162–F1963. Disordered stretches follow at residues L1317–Q1336 and L1912–F1963. The span at E1322–Q1336 shows a compositional bias: basic and acidic residues.

It belongs to the TRAFAC class myosin-kinesin ATPase superfamily. Myosin family. In terms of assembly, muscle myosin is a hexameric protein that consists of 2 heavy chain subunits (MHC), 2 alkali light chain subunits (MLC) and 2 regulatory light chain subunits (MLC-2). Forms a complex composed of chaperone unc-45, unc-54 and ubiquitin-protein ligase ufd-2; promotes poly-ubiquitination of unfolded unc-54. Within the complex interacts with unc-45 (via UCS domain) and ufd-2. Interacts with itr-1 (via c-terminal coiled coil domain). Post-translationally, unfolded unc-54 is poly-ubiquitinated by ufd-2.

It is found in the cytoplasm. It localises to the myofibril. In terms of biological role, required for muscle contraction. The polypeptide is Myosin-4 (unc-54) (Caenorhabditis elegans).